We begin with the raw amino-acid sequence, 202 residues long: Nucleoside triphosphate pyrophosphatase (202 aa).

The Proton acceptor role is filled by Asp77.

This sequence belongs to the Maf family. Requires a divalent metal cation as cofactor.

It localises to the cytoplasm. The catalysed reaction is a ribonucleoside 5'-triphosphate + H2O = a ribonucleoside 5'-phosphate + diphosphate + H(+). It catalyses the reaction a 2'-deoxyribonucleoside 5'-triphosphate + H2O = a 2'-deoxyribonucleoside 5'-phosphate + diphosphate + H(+). Its function is as follows. Nucleoside triphosphate pyrophosphatase. May have a dual role in cell division arrest and in preventing the incorporation of modified nucleotides into cellular nucleic acids. This is Nucleoside triphosphate pyrophosphatase from Rickettsia canadensis (strain McKiel).